A 287-amino-acid chain; its full sequence is Pantothenate synthetase (287 aa).

Residue 30–37 (MGALHEGH) coordinates ATP. His-37 serves as the catalytic Proton donor. Gln-61 contacts (R)-pantoate. Gln-61 is a binding site for beta-alanine. 147–150 (GEKD) serves as a coordination point for ATP. Residue Gln-153 coordinates (R)-pantoate. 184–187 (MSSR) is an ATP binding site.

It belongs to the pantothenate synthetase family. In terms of assembly, homodimer.

The protein localises to the cytoplasm. The enzyme catalyses (R)-pantoate + beta-alanine + ATP = (R)-pantothenate + AMP + diphosphate + H(+). It participates in cofactor biosynthesis; (R)-pantothenate biosynthesis; (R)-pantothenate from (R)-pantoate and beta-alanine: step 1/1. Functionally, catalyzes the condensation of pantoate with beta-alanine in an ATP-dependent reaction via a pantoyl-adenylate intermediate. The chain is Pantothenate synthetase from Granulibacter bethesdensis (strain ATCC BAA-1260 / CGDNIH1).